The following is a 204-amino-acid chain: High mobility group-T protein (204 aa).

2 DNA-binding regions (HMG box) span residues 8 to 78 (PRGK…RSYI) and 94 to 162 (PKRP…TAYR). The interval 162-204 (RNKGKVPVSMPAKAAAPAKDDDDDDDDDDDDEDDDDDDDEDDE) is disordered. Residues 181-204 (DDDDDDDDDDDDEDDDDDDDEDDE) show a composition bias toward acidic residues.

It belongs to the HMGB family.

The protein resides in the nucleus. Its subcellular location is the chromosome. In terms of biological role, binds preferentially single-stranded DNA and unwinds double-stranded DNA. This is High mobility group-T protein from Oncorhynchus mykiss (Rainbow trout).